The chain runs to 50 residues: uncharacterized protein (50 aa).

This is an uncharacterized protein from Treponema pallidum (strain Nichols).